A 349-amino-acid polypeptide reads, in one-letter code: Putative ABC transporter permease protein MJ0087 (349 aa).

The next 9 membrane-spanning stretches (helical) occupy residues 15 to 35, 69 to 89, 100 to 120, 135 to 155, 166 to 186, 206 to 226, 254 to 274, 295 to 315, and 318 to 338; these read IIFG…ALCV, IFAA…MQCI, MGIS…FGFG, MITI…LLLA, ILAG…IQYF, AIWT…IYFM, LIGM…LGII, FLIP…DTFA, and IIAP…APMF.

Belongs to the binding-protein-dependent transport system permease family. FecCD subfamily.

It is found in the cell membrane. In terms of biological role, probably part of a binding-protein-dependent transport system. Probably responsible for the translocation of the substrate across the membrane. The polypeptide is Putative ABC transporter permease protein MJ0087 (Methanocaldococcus jannaschii (strain ATCC 43067 / DSM 2661 / JAL-1 / JCM 10045 / NBRC 100440) (Methanococcus jannaschii)).